The following is a 347-amino-acid chain: Heat-inducible transcription repressor HrcA (347 aa).

The protein belongs to the HrcA family.

In terms of biological role, negative regulator of class I heat shock genes (grpE-dnaK-dnaJ and groELS operons). Prevents heat-shock induction of these operons. The protein is Heat-inducible transcription repressor HrcA of Desulforamulus reducens (strain ATCC BAA-1160 / DSM 100696 / MI-1) (Desulfotomaculum reducens).